A 478-amino-acid polypeptide reads, in one-letter code: Zinc finger C3HC-type protein 1-like (478 aa).

The C3HC-type zinc-finger motif lies at 93–147; the sequence is CAKYGWSNIECDMLKCSSCNAYLCASLQPVLDFSKYKQRCVELQEALRKAHEKFC. A disordered region spans residues 285–389; the sequence is LSAPNTPVSP…SSSSDTSPRG (105 aa). Over residues 351–363 the composition is skewed to polar residues; it reads SMGQGESSGLSNE. Over residues 377–388 the composition is skewed to low complexity; sequence LCSSSSSDTSPR.

Post-translationally, phosphorylated. May also be weakly phosphorylated on Tyr residues.

The protein resides in the nucleus. The protein localises to the nucleus envelope. In terms of biological role, required for proper positioning of a substantial amount of TPR at the nuclear basket (NB) through interaction with TPR. The protein is Zinc finger C3HC-type protein 1-like (zc3hc1) of Xenopus tropicalis (Western clawed frog).